The following is a 124-amino-acid chain: Fluoride-specific ion channel FluC 1 (124 aa).

4 helical membrane passes run 1–21 (MNWL…YVTD), 30–50 (AVFP…LGLL), 56–76 (AGVA…GALT), and 102–122 (IASV…AQAL). 2 residues coordinate Na(+): Gly-73 and Thr-76.

Belongs to the fluoride channel Fluc/FEX (TC 1.A.43) family.

It localises to the cell membrane. The catalysed reaction is fluoride(in) = fluoride(out). Its activity is regulated as follows. Na(+) is not transported, but it plays an essential structural role and its presence is essential for fluoride channel function. In terms of biological role, fluoride-specific ion channel. Important for reducing fluoride concentration in the cell, thus reducing its toxicity. In Streptomyces avermitilis (strain ATCC 31267 / DSM 46492 / JCM 5070 / NBRC 14893 / NCIMB 12804 / NRRL 8165 / MA-4680), this protein is Fluoride-specific ion channel FluC 1.